The primary structure comprises 75 residues: MSKRFKFDSSEMIYLTDKLMNAASNRYSIVVQVARRAKRVRYDTVENIDDPMIKPVQRALMEMTDELTEPELLRD.

The protein belongs to the RNA polymerase subunit omega family. In cyanobacteria the RNAP catalytic core is composed of 2 alpha, 1 beta, 1 beta', 1 gamma and 1 omega subunit. When a sigma factor is associated with the core the holoenzyme is formed, which can initiate transcription.

The enzyme catalyses RNA(n) + a ribonucleoside 5'-triphosphate = RNA(n+1) + diphosphate. Its function is as follows. Promotes RNA polymerase assembly. Latches the N- and C-terminal regions of the beta' subunit thereby facilitating its interaction with the beta and alpha subunits. This is DNA-directed RNA polymerase subunit omega from Microcystis aeruginosa (strain NIES-843 / IAM M-2473).